We begin with the raw amino-acid sequence, 119 residues long: Small ribosomal subunit protein uS13 (119 aa).

Residues 96–119 (PVRGQRTKTNARTRKGPRKLIKSR) form a disordered region.

The protein belongs to the universal ribosomal protein uS13 family. As to quaternary structure, part of the 30S ribosomal subunit. Forms a loose heterodimer with protein S19. Forms two bridges to the 50S subunit in the 70S ribosome.

In terms of biological role, located at the top of the head of the 30S subunit, it contacts several helices of the 16S rRNA. In the 70S ribosome it contacts the 23S rRNA (bridge B1a) and protein L5 of the 50S subunit (bridge B1b), connecting the 2 subunits; these bridges are implicated in subunit movement. Contacts the tRNAs in the A and P-sites. In Buchnera aphidicola subsp. Cinara cedri (strain Cc), this protein is Small ribosomal subunit protein uS13.